The sequence spans 227 residues: MSLLTLIRHGQSIWNQQNRFTGWVDVSLSQSGVKEAQRAAQMLSQQRFDLAFTSELLRAQDTLYEILRHNRQCHQYVRIHDTGSQWYEHFEASPAEELELRIYVSQQLNERYYGDLQGLNKDKARQLFGDEQVHTWRRSYNVAPPNGESLAMTATRAIAYFQSHIVPALQQGKNVLVCAHGNSLRAIIMHIEKMTAAQIAAYELKTASPHIYQCNTAMDILSKQVLE.

Substrate is bound by residues 8–15 (RHGQSIWN), 21–22 (TG), Arg-58, 110–113 (ERYY), Lys-121, 137–138 (RR), and 181–182 (GN). Catalysis depends on His-9, which acts as the Tele-phosphohistidine intermediate. Glu-110 acts as the Proton donor/acceptor in catalysis.

It belongs to the phosphoglycerate mutase family. BPG-dependent PGAM subfamily. As to quaternary structure, homodimer.

The enzyme catalyses (2R)-2-phosphoglycerate = (2R)-3-phosphoglycerate. It participates in carbohydrate degradation; glycolysis; pyruvate from D-glyceraldehyde 3-phosphate: step 3/5. Its function is as follows. Catalyzes the interconversion of 2-phosphoglycerate and 3-phosphoglycerate. The chain is 2,3-bisphosphoglycerate-dependent phosphoglycerate mutase from Pseudoalteromonas atlantica (strain T6c / ATCC BAA-1087).